The chain runs to 574 residues: Streptolysin O (574 aa).

The signal sequence occupies residues 1–36 (MKDMSNKKIFKKYSRVAGLLTAALIVGNLVTANADS). Low complexity predominate over residues 37–52 (NKQNTANTETTTTNEQ). Disordered stretches follow at residues 37–64 (NKQN…TTEK) and 84–111 (KEMP…HTEE). The segment covering 53 to 64 (PKPESSELTTEK) has biased composition (basic and acidic residues). A run of 4 beta stranded transmembrane segments spans residues 263 to 276 (KSQI…NSKI), 283 to 292 (IDFKSISKGE), 361 to 370 (SNDVEAAFSA), and 378 to 390 (KTNG…LENS). Residues 532 to 542 (ECTGLAWEWWR) carry the Conserved undecapeptide motif. The short motif at 564–565 (TL) is the Cholesterol binding element.

Belongs to the cholesterol-dependent cytolysin family. In terms of assembly, homooligomeric pore complex of 35 to 50 subunits; when inserted in the host membrane.

It is found in the secreted. The protein resides in the host cell membrane. Functionally, a cholesterol-dependent toxin that causes cytolysis by forming pores in cholesterol containing host membranes. After binding to target membranes, the protein undergoes a major conformation change, leading to its insertion in the host membrane and formation of an oligomeric pore complex. Cholesterol is required for binding to host membranes, membrane insertion and pore formation; cholesterol binding is mediated by a Thr-Leu pair in the C-terminus. Can be reversibly inactivated by oxidation. In Streptococcus dysgalactiae subsp. equisimilis (Streptococcus equisimilis), this protein is Streptolysin O (slo).